Reading from the N-terminus, the 277-residue chain is Caspase-3 (277 aa).

Methionine 1 carries the N-acetylmethionine modification. Propeptides lie at residues 1-9 and 10-28; these read MENNETSVD and AKSI…KSMD. At lysine 11 the chain carries N6-acetyllysine. The residue at position 26 (serine 26) is a Phosphoserine. Catalysis depends on residues histidine 121 and cysteine 163. Cysteine 163 is modified (S-nitrosocysteine; in inhibited form).

The protein belongs to the peptidase C14A family. As to quaternary structure, heterotetramer that consists of two anti-parallel arranged heterodimers, each one formed by a 17 kDa (p17) and a 12 kDa (p12) subunit. Interacts with BIRC6/bruce. Cleavage by granzyme B, caspase-6, caspase-8 and caspase-10 generates the two active subunits. Additional processing of the propeptides is likely due to the autocatalytic activity of the activated protease. Active heterodimers between the small subunit of caspase-7 protease and the large subunit of caspase-3 also occur and vice versa. In terms of processing, S-nitrosylated on its catalytic site cysteine in unstimulated cell lines and denitrosylated upon activation of the Fas apoptotic pathway, associated with an increase in intracellular caspase activity. Fas therefore activates caspase-3 not only by inducing the cleavage of the caspase zymogen to its active subunits, but also by stimulating the denitrosylation of its active site thiol. Post-translationally, ubiquitinated by BIRC6; this activity is inhibited by DIABLO/SMAC.

The protein localises to the cytoplasm. The catalysed reaction is Strict requirement for an Asp residue at positions P1 and P4. It has a preferred cleavage sequence of Asp-Xaa-Xaa-Asp-|- with a hydrophobic amino-acid residue at P2 and a hydrophilic amino-acid residue at P3, although Val or Ala are also accepted at this position.. Its activity is regulated as follows. Inhibited by BIRC6; following inhibition of BIRC6-caspase binding by DIABLO/SMAC, BIRC6 is subjected to caspase cleavage, leading to an increase in active caspases. In terms of biological role, involved in the activation cascade of caspases responsible for apoptosis execution. At the onset of apoptosis, it proteolytically cleaves poly(ADP-ribose) polymerase PARP1 at a '216-Asp-|-Gly-217' bond. Cleaves and activates sterol regulatory element binding proteins (SREBPs) between the basic helix-loop-helix leucine zipper domain and the membrane attachment domain. Cleaves and activates caspase-6, -7 and -9 (CASP6, CASP7 and CASP9, respectively). Cleaves and inactivates interleukin-18 (IL18). Triggers cell adhesion in sympathetic neurons through RET cleavage. Cleaves IL-1 beta between an Asp and an Ala, releasing the mature cytokine which is involved in a variety of inflammatory processes. Cleaves and inhibits serine/threonine-protein kinase AKT1 in response to oxidative stress. Acts as an inhibitor of type I interferon production during virus-induced apoptosis by mediating cleavage of antiviral proteins CGAS, IRF3 and MAVS, thereby preventing cytokine overproduction. Also involved in pyroptosis by mediating cleavage and activation of gasdermin-E (GSDME). Cleaves XRCC4 and phospholipid scramblase proteins XKR4, XKR8 and XKR9, leading to promote phosphatidylserine exposure on apoptotic cell surface. Cleaves BIRC6 following inhibition of BIRC6-caspase binding by DIABLO/SMAC. This is Caspase-3 (CASP3) from Oryctolagus cuniculus (Rabbit).